Consider the following 225-residue polypeptide: NAD(P)H-quinone oxidoreductase subunit K, chloroplastic (225 aa).

Residues cysteine 43, cysteine 44, cysteine 108, and cysteine 139 each coordinate [4Fe-4S] cluster.

It belongs to the complex I 20 kDa subunit family. In terms of assembly, NDH is composed of at least 16 different subunits, 5 of which are encoded in the nucleus. It depends on [4Fe-4S] cluster as a cofactor.

It localises to the plastid. The protein resides in the chloroplast thylakoid membrane. The catalysed reaction is a plastoquinone + NADH + (n+1) H(+)(in) = a plastoquinol + NAD(+) + n H(+)(out). The enzyme catalyses a plastoquinone + NADPH + (n+1) H(+)(in) = a plastoquinol + NADP(+) + n H(+)(out). Its function is as follows. NDH shuttles electrons from NAD(P)H:plastoquinone, via FMN and iron-sulfur (Fe-S) centers, to quinones in the photosynthetic chain and possibly in a chloroplast respiratory chain. The immediate electron acceptor for the enzyme in this species is believed to be plastoquinone. Couples the redox reaction to proton translocation, and thus conserves the redox energy in a proton gradient. The sequence is that of NAD(P)H-quinone oxidoreductase subunit K, chloroplastic from Guizotia abyssinica (Niger).